Here is a 200-residue protein sequence, read N- to C-terminus: dTTP/UTP pyrophosphatase (200 aa).

Aspartate 81 acts as the Proton acceptor in catalysis.

The protein belongs to the Maf family. YhdE subfamily. A divalent metal cation serves as cofactor.

It localises to the cytoplasm. It catalyses the reaction dTTP + H2O = dTMP + diphosphate + H(+). It carries out the reaction UTP + H2O = UMP + diphosphate + H(+). Functionally, nucleoside triphosphate pyrophosphatase that hydrolyzes dTTP and UTP. May have a dual role in cell division arrest and in preventing the incorporation of modified nucleotides into cellular nucleic acids. This chain is dTTP/UTP pyrophosphatase, found in Cupriavidus metallidurans (strain ATCC 43123 / DSM 2839 / NBRC 102507 / CH34) (Ralstonia metallidurans).